A 240-amino-acid chain; its full sequence is UDP-2,3-diacylglucosamine hydrolase (240 aa).

5 residues coordinate Mn(2+): Asp-8, His-10, Asp-41, Asn-79, and His-114. Substrate is bound at residue 79–80 (NR). The substrate site is built by Asp-122, Ser-160, Asn-164, Lys-167, and His-195. Mn(2+) is bound by residues His-195 and His-197.

The protein belongs to the LpxH family. It depends on Mn(2+) as a cofactor.

The protein localises to the cell inner membrane. It carries out the reaction UDP-2-N,3-O-bis[(3R)-3-hydroxytetradecanoyl]-alpha-D-glucosamine + H2O = 2-N,3-O-bis[(3R)-3-hydroxytetradecanoyl]-alpha-D-glucosaminyl 1-phosphate + UMP + 2 H(+). Its pathway is glycolipid biosynthesis; lipid IV(A) biosynthesis; lipid IV(A) from (3R)-3-hydroxytetradecanoyl-[acyl-carrier-protein] and UDP-N-acetyl-alpha-D-glucosamine: step 4/6. Functionally, hydrolyzes the pyrophosphate bond of UDP-2,3-diacylglucosamine to yield 2,3-diacylglucosamine 1-phosphate (lipid X) and UMP by catalyzing the attack of water at the alpha-P atom. Involved in the biosynthesis of lipid A, a phosphorylated glycolipid that anchors the lipopolysaccharide to the outer membrane of the cell. This is UDP-2,3-diacylglucosamine hydrolase from Shigella sonnei (strain Ss046).